Reading from the N-terminus, the 509-residue chain is Probable glycine dehydrogenase (decarboxylating) subunit 2 (509 aa).

Position 278 is an N6-(pyridoxal phosphate)lysine (Lys278).

It belongs to the GcvP family. C-terminal subunit subfamily. In terms of assembly, the glycine cleavage system is composed of four proteins: P, T, L and H. In this organism, the P 'protein' is a heterodimer of two subunits. Requires pyridoxal 5'-phosphate as cofactor.

It carries out the reaction N(6)-[(R)-lipoyl]-L-lysyl-[glycine-cleavage complex H protein] + glycine + H(+) = N(6)-[(R)-S(8)-aminomethyldihydrolipoyl]-L-lysyl-[glycine-cleavage complex H protein] + CO2. In terms of biological role, the glycine cleavage system catalyzes the degradation of glycine. The P protein binds the alpha-amino group of glycine through its pyridoxal phosphate cofactor; CO(2) is released and the remaining methylamine moiety is then transferred to the lipoamide cofactor of the H protein. The sequence is that of Probable glycine dehydrogenase (decarboxylating) subunit 2 from Saccharolobus islandicus (strain Y.N.15.51 / Yellowstone #2) (Sulfolobus islandicus).